The sequence spans 275 residues: Elongation factor Ts (275 aa).

The tract at residues 76 to 79 is involved in Mg(2+) ion dislocation from EF-Tu; the sequence is TDFV.

The protein belongs to the EF-Ts family.

It is found in the cytoplasm. In terms of biological role, associates with the EF-Tu.GDP complex and induces the exchange of GDP to GTP. It remains bound to the aminoacyl-tRNA.EF-Tu.GTP complex up to the GTP hydrolysis stage on the ribosome. The sequence is that of Elongation factor Ts from Mycobacterium avium (strain 104).